The following is a 141-amino-acid chain: Large ribosomal subunit protein uL11 (141 aa).

This sequence belongs to the universal ribosomal protein uL11 family. As to quaternary structure, part of the ribosomal stalk of the 50S ribosomal subunit. Interacts with L10 and the large rRNA to form the base of the stalk. L10 forms an elongated spine to which L12 dimers bind in a sequential fashion forming a multimeric L10(L12)X complex. One or more lysine residues are methylated.

Its function is as follows. Forms part of the ribosomal stalk which helps the ribosome interact with GTP-bound translation factors. The polypeptide is Large ribosomal subunit protein uL11 (Chloroflexus aggregans (strain MD-66 / DSM 9485)).